A 364-amino-acid chain; its full sequence is MAGYNLEAIEAAPLKDDLDIVIPTIRSLDFLEQWRPFLHHYHLIIVQDGDPSIKIRVPEGYDYELYNRNDINRILGPRANCISYKDGGCRCFGFMVSKKKYIYTIDDDCFVAKDPSGKDINVIAQHIKNLETPSTPHYFNTLYDPFRDGTDFVRGYPFSLREGVQTAISHGLWLNIPDYDAPTQLVKPRERNTRYVDAVMTIPKRVLYPMCGMNLAFNRELVGPAMYFGLMGEGQPISRYDDMWAGWAAKVVCDHLGFGVKTGLPYLWHSKASNPFVNLKKEHKGLHWQEDMVPFFQNLRLSKESDTAAKCYMEISNMTKEKLTKVDPYFEKLADAMVVWIEAWEELNPPVKKKQSDGKDVKAK.

The short motif at 106–108 is the DXD motif element; that stretch reads DDD. R154 is a glycosylation site (N-linked (Glc...) arginine).

It belongs to the RGP family. In terms of assembly, heteromers with RGP1 and RGP2. The cofactor is Mn(2+). It depends on Mg(2+) as a cofactor. In terms of processing, reversibly glycosylated in vitro by UDP-glucose, UDP-xylose and UDP-galactose, but not UDP-mannose. Specifically expressed in developing seeds.

It is found in the cytoplasm. Its subcellular location is the cytosol. It localises to the golgi apparatus. The enzyme catalyses UDP-beta-L-arabinofuranose = UDP-beta-L-arabinopyranose. In terms of biological role, probable UDP-L-arabinose mutase involved in the biosynthesis of cell wall non-cellulosic polysaccharides. In Arabidopsis thaliana (Mouse-ear cress), this protein is Probable UDP-arabinopyranose mutase 4.